Reading from the N-terminus, the 1086-residue chain is MLEADLVSKMLRAVLQSHKNGIVLPRLQGEYRSLTGDWIPFKQLGYPTLEAYLRSVPAVVRIEASRSGEIVCYAVACTETARIAQLVARQRTSKRKIGRQINCQMRVKKAMPFFLEGKPKATLRQPGFASDYSISRKPNSALLRDRGSALGVKADVDMPPYPDTPVQRHASMSANSRFSPKSSLPASFQTHISRACPTEVNDNLNQTVEKPNITPPASYTNKMDEVQNRIKEILDKHNNGIWISKLPHFYKEFYKEDLNQGVLQQFEHWPHICTVEKPCGGGQDSLLYPARREQPLKSDQDPEKELPPPPPAPKQEVPSQGSPAVMPDVKEKVAELLGKYSSGLWASALPKAFEDMYKVKFPEDALKNLASLSDVCTINYISGNTQKAILYAKLPLPTDKILKDEGQAQGDFDIKSMIEQEYLQIEKNMAESADEFLEDITVPPLVIPTEASPSVLVVELSNTNDVVIRYVGKDYSAAQELMEDEMKEFYSKNPRVTPIQTVHVGQLLAVNAEEDAWLRAQIISTDENKIKVCYVDYGFCENIEKSKAYRLNPRFCSLSFQATKCKLAGLEVLNDDPDLVKAVESLTCGKIFAVEILDKSDVPLVVLYDTSGEDDININATCLKAICDRSLQVHLQVDAMYTNVKVTNICSDGTLYCQVPCKGLNKLNDLLHKTEDYFHCKHMTSEYFISLPFCGKICLFHCKGKWLRVEITNVHSSRALDVQFLDSGNSTSVKVSELREIPPRFLQEMLAIPPQAIKCCLADLPQSIGMWTPDAVLWLRDSVLNCSDCSIKVTKMDETKGVAYVYLFTPNNFPDPHRSINRQITNADLWKHQKDVFLSAVSTAASSPGNRNGGTPAPGSPAESLRKSHPEVIKKSVLDHTSSFSLEELPPPVHLSRSGEHMDVYVPVACHPGHFVIQPWQEIHKLEVLMEEMILYYSVSEERHIAVERDQVYAAKVENKWYRVLLKGILTNGLVSVYELDYGKHELVNIRKVQPLVDVFRKLPFQAVTAQLAGVKCSQWSEEASMVFRNHVEKKALVALVQTVVEHTNPWDRKVVLYLVDTSLPDTDTWIHDFMSQYLLELSKVN.

HTH OST-type domains lie at 3–76 (EADL…YAVA) and 222–291 (KMDE…YPAR). Residues 295–306 (PLKSDQDPEKEL) are compositionally biased toward basic and acidic residues. Residues 295-324 (PLKSDQDPEKELPPPPPAPKQEVPSQGSPA) form a disordered region. Positions 325–394 (VMPDVKEKVA…TQKAILYAKL (70 aa)) constitute an HTH OST-type 3 domain. 2 consecutive Tudor domains span residues 501–558 (TVHV…FCSL) and 691–748 (LPFC…FLQE). A disordered region spans residues 844 to 866 (AASSPGNRNGGTPAPGSPAESLR). A Phosphoserine modification is found at serine 847. Positions 849-1086 (GNRNGGTPAP…QYLLELSKVN (238 aa)) are interaction with CDK17. The interval 881-1086 (TSSFSLEELP…QYLLELSKVN (206 aa)) is interaction with CABLES1.

It belongs to the TDRD7 family. In terms of assembly, found in a mRNP complex, at least composed of TDRD1, TDRD6, TDRD7 and DDX4. Found in a complex containing CABLES1, CDK16 and CDK17. Interacts with CABLES1, CDK17 and PIWIL1. Mainly expressed in testis. Expressed in spermatogonia, spermatocytes and round spermatids (at protein level). Also expressed in the developing lens.

Its subcellular location is the cytoplasm. Its function is as follows. Component of specific cytoplasmic RNA granules involved in post-transcriptional regulation of specific genes: probably acts by binding to specific mRNAs and regulating their translation. Required for lens transparency during lens development, by regulating translation of genes such as CRYBB3 and HSPB1 in the developing lens. Also required during spermatogenesis. This Mus musculus (Mouse) protein is Tudor domain-containing protein 7 (Tdrd7).